We begin with the raw amino-acid sequence, 378 residues long: TelA-like protein SAS1347 (378 aa).

The protein belongs to the TelA family.

The chain is TelA-like protein SAS1347 from Staphylococcus aureus (strain MSSA476).